The following is a 321-amino-acid chain: uncharacterized protein (321 aa).

Residue 28 to 35 (GPINSGKT) participates in ATP binding.

Belongs to the archaeal ATPase family.

This is an uncharacterized protein from Pyrococcus horikoshii (strain ATCC 700860 / DSM 12428 / JCM 9974 / NBRC 100139 / OT-3).